The chain runs to 326 residues: Nitrogen metabolite regulation-like protein bik4 (326 aa).

NADP(+) is bound by residues Gly13 to Val18 and Phe161 to Asn164.

The protein belongs to the NmrA-type oxidoreductase family.

Nitrogen metabolite regulation-like protein involved in the regulation of the gene cluster that mediates the biosynthesis of bikaverin, a red pigment also considered as a mycotoxin. The sequence is that of Nitrogen metabolite regulation-like protein bik4 from Gibberella fujikuroi (strain CBS 195.34 / IMI 58289 / NRRL A-6831) (Bakanae and foot rot disease fungus).